The chain runs to 129 residues: Lysozyme C (129 aa).

Positions 1–129 (KVYGRCELAA…VNAWTRGCRL (129 aa)) constitute a C-type lysozyme domain. 4 disulfides stabilise this stretch: Cys6/Cys127, Cys30/Cys115, Cys64/Cys80, and Cys76/Cys94. Catalysis depends on residues Glu35 and Asp52.

Belongs to the glycosyl hydrolase 22 family. In terms of assembly, monomer.

The protein localises to the secreted. It catalyses the reaction Hydrolysis of (1-&gt;4)-beta-linkages between N-acetylmuramic acid and N-acetyl-D-glucosamine residues in a peptidoglycan and between N-acetyl-D-glucosamine residues in chitodextrins.. In terms of biological role, lysozymes have primarily a bacteriolytic function; those in tissues and body fluids are associated with the monocyte-macrophage system and enhance the activity of immunoagents. This Syrmaticus soemmerringii (Copper pheasant) protein is Lysozyme C (LYZ).